The sequence spans 238 residues: Aspartate/glutamate leucyltransferase (238 aa).

This sequence belongs to the R-transferase family. Bpt subfamily.

Its subcellular location is the cytoplasm. The enzyme catalyses N-terminal L-glutamyl-[protein] + L-leucyl-tRNA(Leu) = N-terminal L-leucyl-L-glutamyl-[protein] + tRNA(Leu) + H(+). The catalysed reaction is N-terminal L-aspartyl-[protein] + L-leucyl-tRNA(Leu) = N-terminal L-leucyl-L-aspartyl-[protein] + tRNA(Leu) + H(+). Functionally, functions in the N-end rule pathway of protein degradation where it conjugates Leu from its aminoacyl-tRNA to the N-termini of proteins containing an N-terminal aspartate or glutamate. In Aeromonas hydrophila subsp. hydrophila (strain ATCC 7966 / DSM 30187 / BCRC 13018 / CCUG 14551 / JCM 1027 / KCTC 2358 / NCIMB 9240 / NCTC 8049), this protein is Aspartate/glutamate leucyltransferase.